We begin with the raw amino-acid sequence, 418 residues long: Serine hydroxymethyltransferase (418 aa).

Residues Leu121 and 125-127 (GHL) contribute to the (6S)-5,6,7,8-tetrahydrofolate site. The residue at position 230 (Lys230) is an N6-(pyridoxal phosphate)lysine. 355 to 357 (SPF) serves as a coordination point for (6S)-5,6,7,8-tetrahydrofolate.

The protein belongs to the SHMT family. As to quaternary structure, homodimer. Requires pyridoxal 5'-phosphate as cofactor.

It is found in the cytoplasm. It carries out the reaction (6R)-5,10-methylene-5,6,7,8-tetrahydrofolate + glycine + H2O = (6S)-5,6,7,8-tetrahydrofolate + L-serine. It functions in the pathway one-carbon metabolism; tetrahydrofolate interconversion. The protein operates within amino-acid biosynthesis; glycine biosynthesis; glycine from L-serine: step 1/1. Its function is as follows. Catalyzes the reversible interconversion of serine and glycine with tetrahydrofolate (THF) serving as the one-carbon carrier. This reaction serves as the major source of one-carbon groups required for the biosynthesis of purines, thymidylate, methionine, and other important biomolecules. Also exhibits THF-independent aldolase activity toward beta-hydroxyamino acids, producing glycine and aldehydes, via a retro-aldol mechanism. The chain is Serine hydroxymethyltransferase from Methylococcus capsulatus (strain ATCC 33009 / NCIMB 11132 / Bath).